A 287-amino-acid chain; its full sequence is Large ribosomal subunit protein uL2 (287 aa).

The disordered stretch occupies residues Leu-203–Ser-287. 2 stretches are compositionally biased toward basic residues: residues Gly-209 to Val-220 and Lys-258 to Ser-287.

The protein belongs to the universal ribosomal protein uL2 family. As to quaternary structure, part of the 50S ribosomal subunit. Forms a bridge to the 30S subunit in the 70S ribosome.

In terms of biological role, one of the primary rRNA binding proteins. Required for association of the 30S and 50S subunits to form the 70S ribosome, for tRNA binding and peptide bond formation. It has been suggested to have peptidyltransferase activity; this is somewhat controversial. Makes several contacts with the 16S rRNA in the 70S ribosome. The protein is Large ribosomal subunit protein uL2 of Nostoc sp. (strain PCC 7120 / SAG 25.82 / UTEX 2576).